The following is a 512-amino-acid chain: Ferrochelatase-2, chloroplastic (512 aa).

The interval 1–32 is disordered; that stretch reads MNCPAMTASPSSSSSSSYSTFRPPPPLLPQLS. The transit peptide at 1-83 directs the protein to the chloroplast; that stretch reads MNCPAMTASP…SNPLNISSSS (83 aa). A compositionally biased stretch (low complexity) spans 9-21; sequence SPSSSSSSSYSTF. Val-84 carries the N-acetylvaline modification.

The protein belongs to the ferrochelatase family. In terms of tissue distribution, expressed in leaves and flowers.

It localises to the plastid. The protein localises to the chloroplast membrane. Its subcellular location is the chloroplast thylakoid membrane. The catalysed reaction is heme b + 2 H(+) = protoporphyrin IX + Fe(2+). The protein operates within porphyrin-containing compound metabolism; protoheme biosynthesis; protoheme from protoporphyrin-IX: step 1/1. Functionally, catalyzes the last step of heme biosynthesis by inserting ferrous iron into protoporphyrin IX to produce protoheme. Produces heme for photosynthetic cytochromes, and for proteins involved in abiotic and biotic stress responses. May play a role in the quality control of individual chloroplasts during photo-oxidative stress through regulation of heme biosynthesis. The protein is Ferrochelatase-2, chloroplastic of Arabidopsis thaliana (Mouse-ear cress).